We begin with the raw amino-acid sequence, 853 residues long: DNA mismatch repair protein MutS (853 aa).

Residue glycine 614 to serine 621 coordinates ATP.

Belongs to the DNA mismatch repair MutS family.

This protein is involved in the repair of mismatches in DNA. It is possible that it carries out the mismatch recognition step. This protein has a weak ATPase activity. This chain is DNA mismatch repair protein MutS, found in Enterobacter sp. (strain 638).